The following is a 315-amino-acid chain: Probable cytochrome c oxidase subunit 2 (315 aa).

Helical transmembrane passes span 54-74 (IALI…PLPW), 96-116 (LLYI…FVCI), and 133-153 (VLIE…IAVP). 4 residues coordinate Cu cation: histidine 235, cysteine 270, cysteine 274, and histidine 278.

It belongs to the cytochrome c oxidase subunit 2 family. Requires Cu cation as cofactor. Heme is required as a cofactor.

The protein resides in the cell membrane. The catalysed reaction is 4 Fe(II)-[cytochrome c] + O2 + 8 H(+)(in) = 4 Fe(III)-[cytochrome c] + 2 H2O + 4 H(+)(out). Subunits I and II form the functional core of the enzyme complex. Electrons originating in cytochrome c are transferred via heme a and Cu(A) to the binuclear center formed by heme a3 and Cu(B). The protein is Probable cytochrome c oxidase subunit 2 (ctaC) of Rickettsia conorii (strain ATCC VR-613 / Malish 7).